A 1140-amino-acid polypeptide reads, in one-letter code: Receptor-type guanylate cyclase gcy-3 (1140 aa).

The first 21 residues, 1–21, serve as a signal peptide directing secretion; sequence MKNVFQLLIPLFFHLFSLVSL. Topologically, residues 22–495 are extracellular; that stretch reads QNIPVSTGTT…CPLPFWEQYG (474 aa). Residues Asn-220, Asn-301, Asn-349, Asn-385, Asn-418, Asn-441, and Asn-459 are each glycosylated (N-linked (GlcNAc...) asparagine). Residues 496-516 traverse the membrane as a helical segment; the sequence is ILIFVGAGVFLIMITTNLICF. Residues 517–1140 are Cytoplasmic-facing; it reads LFMIKNRREE…RQYKMDTLKI (624 aa). In terms of domain architecture, Protein kinase spans 538–826; the sequence is FVKLRELERK…NICEQLRDLM (289 aa). ATP is bound by residues 544–552 and Lys-582; that span reads LERKSKGTS. In terms of domain architecture, Guanylate cyclase spans 897 to 1027; it reads TVFFSDVVKF…DTVNTASRME (131 aa). Positions 1083-1140 are disordered; the sequence is PSISNRSTPPVTQERFTVRAPDTPEARSVSSHGSRPSSNHNNNNDPLYRQYKMDTLKI. The span at 1084–1097 shows a compositional bias: polar residues; that stretch reads SISNRSTPPVTQER. Over residues 1109-1126 the composition is skewed to low complexity; that stretch reads RSVSSHGSRPSSNHNNNN.

Belongs to the adenylyl cyclase class-4/guanylyl cyclase family. Expressed asymmetrically in ASE right (ASER) sensory neuron and bilaterally in ASI sensory neurons. Expressed in PVT interneuron.

It is found in the cell membrane. It catalyses the reaction GTP = 3',5'-cyclic GMP + diphosphate. In terms of biological role, guanylate cyclase involved in the production of the second messenger cGMP. This chain is Receptor-type guanylate cyclase gcy-3, found in Caenorhabditis elegans.